We begin with the raw amino-acid sequence, 134 residues long: Ribonuclease VapC1 (134 aa).

The PINc domain occupies 4–123 (IIDTSIIIAL…LNVKDFKRIQ (120 aa)). Mg(2+)-binding residues include aspartate 6 and aspartate 97.

Belongs to the PINc/VapC protein family. Mg(2+) serves as cofactor.

In terms of biological role, toxic component of a type II toxin-antitoxin (TA) system. Has ssRNase activity. Upon expression in E.coli inhibits growth in liquid culture; this toxic effect is neutralized by coexpression with cognate antitoxin VapB1. Its RNase activity is partially inhibited in vitro by VapB1. This Rickettsia felis (strain ATCC VR-1525 / URRWXCal2) (Rickettsia azadi) protein is Ribonuclease VapC1.